The sequence spans 358 residues: BAG family molecular chaperone regulator 1 (358 aa).

Composition is skewed to basic and acidic residues over residues 1-14, 26-39, and 85-94; these read MADR…RGDQ, SARE…RAER, and KVAHSKELTR. Residues 1-113 form a disordered region; that stretch reads MADRGGARRP…VTGTQEATQV (113 aa). 7 repeat units span residues 102–111, 114–119, 120–125, 126–131, 132–137, 144–149, and 150–155. A 7 X 6 AA tandem repeat of E-E-X(4) region spans residues 114-212; sequence EEVTTIEEAT…LIFKGKSLKE (99 aa). The Ubiquitin-like domain maps to 157–237; that stretch reads LSVVVTHSNE…VMLIGEKSNP (81 aa). Positions 185–232 are interaction with HSPA8; sequence DLAQLVEEATGVPLPFQKLIFKGKSLKEMETPLSALGMQNGCRVMLIG. The interaction with PPP1R15A stretch occupies residues 229–358; the sequence is MLIGEKSNPE…LQSTNLALPE (130 aa). Residues 259-339 enclose the BAG domain; it reads HLEELNKELS…VFLAECDTVE (81 aa).

In terms of assembly, homodimer. Forms a heteromeric complex with HSP70/HSC70. Binds to the ATPase domain of HSP/HSC70 chaperones. Interacts with NR3C1. Interacts with the N-terminal region of MAPRE2. Interacts with PPP1R15A. Interacts with BCL2 in an ATP-dependent manner. Interacts with SIAH1, SIAH2, HSPA8 (via NBD), HSPA1A (via NBD) and HSPA1B (via NBD). Interacts with ESR1; the interaction is promoted in the absence of estradiol (17-beta-estradiol/E2). Ubiquitinated; mediated by SIAH1 or SIAH2 and leading to its subsequent proteasomal degradation. Expressed in the CA1 region of the hippocampus (at protein level). Expressed in the uterus (at protein level).

The protein resides in the nucleus. It localises to the cytoplasm. In terms of biological role, co-chaperone for HSP70 and HSC70 chaperone proteins. Acts as a nucleotide-exchange factor (NEF) promoting the release of ADP from the HSP70 and HSC70 proteins thereby triggering client/substrate protein release. Nucleotide release is mediated via its binding to the nucleotide-binding domain (NBD) of HSPA8/HSC70 where as the substrate release is mediated via its binding to the substrate-binding domain (SBD) of HSPA8/HSC70. Inhibits the pro-apoptotic function of PPP1R15A, and has anti-apoptotic activity. Markedly increases the anti-cell death function of BCL2 induced by various stimuli. Involved in the STUB1-mediated proteasomal degradation of ESR1 in response to age-related circulating estradiol (17-beta-estradiol/E2) decline, thereby promotes neuronal apoptosis in response to ischemic reperfusion injury. The protein is BAG family molecular chaperone regulator 1 (Bag1) of Rattus norvegicus (Rat).